The following is a 725-amino-acid chain: Methionine--tRNA ligase (725 aa).

The 'HIGH' region motif lies at 27–37 (PYANGQIHIGH). 4 residues coordinate Zn(2+): cysteine 158, cysteine 161, cysteine 171, and cysteine 174. The 'KMSKS' region signature appears at 348-352 (KMSKS). Lysine 351 contacts ATP. The tRNA-binding domain occupies 619-725 (DFAKIDLRIA…SGAKPGMRVK (107 aa)).

Belongs to the class-I aminoacyl-tRNA synthetase family. MetG type 1 subfamily. In terms of assembly, homodimer. The cofactor is Zn(2+).

The protein resides in the cytoplasm. The enzyme catalyses tRNA(Met) + L-methionine + ATP = L-methionyl-tRNA(Met) + AMP + diphosphate. Functionally, is required not only for elongation of protein synthesis but also for the initiation of all mRNA translation through initiator tRNA(fMet) aminoacylation. The sequence is that of Methionine--tRNA ligase from Burkholderia pseudomallei (strain 668).